Here is a 30-residue protein sequence, read N- to C-terminus: M-poneritoxin-Nc3a (30 aa).

It belongs to the ponericin-G family. In terms of tissue distribution, expressed by the venom gland.

Its subcellular location is the secreted. It is found in the target cell membrane. Membrane-perturbating peptide with multiple activities. It is insecticidal, since it induces contractile paralysis in insects (L.cuprina) during several hours and death after 24 hours. It shows a relatively strong and broad-spectrum antibacterial activity against both Gram-positive and Gram-negative bacteria (MIC&lt;20 uM). It is also antiparasitic, since it potently inhibits the larval development of the major pathogenic nematode of ruminants (H.contortus, IC(50)=5.6 uM) and reduces the motility of adult males of the other nematode B.malayi. It also shows cytotoxic activity against HEK293 cells (EC(50)=5-7 uM) but does not induce hemolysis in human erythrocytes. In addition, it causes a moderate increase in intracellular calcium concentration on neuronal and epithelial cell lines, which supports a non-specific membrane perturbation mechanism of action. In vivo, it induces pain by intraplantar injection into mice, suggesting a defensive function against vertebrate predators. This is M-poneritoxin-Nc3a from Neoponera commutata (Large hunting ant).